The primary structure comprises 294 residues: Phosphatidylserine decarboxylase proenzyme (294 aa).

Residues Asp-113, His-169, and Ser-256 each act as charge relay system; for autoendoproteolytic cleavage activity in the active site. Ser-256 functions as the Schiff-base intermediate with substrate; via pyruvic acid; for decarboxylase activity in the catalytic mechanism. At Ser-256 the chain carries Pyruvic acid (Ser); by autocatalysis.

Belongs to the phosphatidylserine decarboxylase family. PSD-B subfamily. Prokaryotic type II sub-subfamily. Heterodimer of a large membrane-associated beta subunit and a small pyruvoyl-containing alpha subunit. Pyruvate serves as cofactor. In terms of processing, is synthesized initially as an inactive proenzyme. Formation of the active enzyme involves a self-maturation process in which the active site pyruvoyl group is generated from an internal serine residue via an autocatalytic post-translational modification. Two non-identical subunits are generated from the proenzyme in this reaction, and the pyruvate is formed at the N-terminus of the alpha chain, which is derived from the carboxyl end of the proenzyme. The autoendoproteolytic cleavage occurs by a canonical serine protease mechanism, in which the side chain hydroxyl group of the serine supplies its oxygen atom to form the C-terminus of the beta chain, while the remainder of the serine residue undergoes an oxidative deamination to produce ammonia and the pyruvoyl prosthetic group on the alpha chain. During this reaction, the Ser that is part of the protease active site of the proenzyme becomes the pyruvoyl prosthetic group, which constitutes an essential element of the active site of the mature decarboxylase.

It is found in the cell membrane. The catalysed reaction is a 1,2-diacyl-sn-glycero-3-phospho-L-serine + H(+) = a 1,2-diacyl-sn-glycero-3-phosphoethanolamine + CO2. Its pathway is phospholipid metabolism; phosphatidylethanolamine biosynthesis; phosphatidylethanolamine from CDP-diacylglycerol: step 2/2. Its function is as follows. Catalyzes the formation of phosphatidylethanolamine (PtdEtn) from phosphatidylserine (PtdSer). The chain is Phosphatidylserine decarboxylase proenzyme from Clostridium perfringens (strain ATCC 13124 / DSM 756 / JCM 1290 / NCIMB 6125 / NCTC 8237 / Type A).